The following is a 499-amino-acid chain: Glycerol kinase (499 aa).

Thr-13 is an ADP binding site. Residues Thr-13, Thr-14, and Ser-15 each coordinate ATP. Thr-13 contributes to the sn-glycerol 3-phosphate binding site. Residue Arg-17 coordinates ADP. Positions 83, 84, 135, and 245 each coordinate sn-glycerol 3-phosphate. Arg-83, Glu-84, Tyr-135, Asp-245, and Gln-246 together coordinate glycerol. ADP contacts are provided by Thr-267 and Gly-310. 4 residues coordinate ATP: Thr-267, Gly-310, Gln-314, and Gly-411. The ADP site is built by Gly-411 and Asn-415.

This sequence belongs to the FGGY kinase family.

It carries out the reaction glycerol + ATP = sn-glycerol 3-phosphate + ADP + H(+). It participates in polyol metabolism; glycerol degradation via glycerol kinase pathway; sn-glycerol 3-phosphate from glycerol: step 1/1. With respect to regulation, inhibited by fructose 1,6-bisphosphate (FBP). Its function is as follows. Key enzyme in the regulation of glycerol uptake and metabolism. Catalyzes the phosphorylation of glycerol to yield sn-glycerol 3-phosphate. The chain is Glycerol kinase from Xanthomonas campestris pv. campestris (strain ATCC 33913 / DSM 3586 / NCPPB 528 / LMG 568 / P 25).